The chain runs to 250 residues: Triosephosphate isomerase (250 aa).

Position 9–11 (9–11 (NWK)) interacts with substrate. The Electrophile role is filled by His-96. The Proton acceptor role is filled by Glu-168. Substrate contacts are provided by residues Gly-174, Ser-216, and 237–238 (GG).

It belongs to the triosephosphate isomerase family. Homodimer.

The protein resides in the cytoplasm. The enzyme catalyses D-glyceraldehyde 3-phosphate = dihydroxyacetone phosphate. The protein operates within carbohydrate biosynthesis; gluconeogenesis. It functions in the pathway carbohydrate degradation; glycolysis; D-glyceraldehyde 3-phosphate from glycerone phosphate: step 1/1. Functionally, involved in the gluconeogenesis. Catalyzes stereospecifically the conversion of dihydroxyacetone phosphate (DHAP) to D-glyceraldehyde-3-phosphate (G3P). The sequence is that of Triosephosphate isomerase from Leptospira interrogans serogroup Icterohaemorrhagiae serovar copenhageni (strain Fiocruz L1-130).